The sequence spans 365 residues: MSDEIVTNKSVTYVNNTTPVTITSSELDLRSCYQDDEVVIEVHAAALNPIDFITHQLCNSYIFGKYPKTYSRDYSGVIIKAGKDVDNRWKVGDKVNGMYSHIYGERGTLTHYLILNPAKDVPITHMVEVPKDENDPYDDFVYAAAWPLTFGTAFSTLYDFKKDWTSDSKVLVIGASTSVSYAFVHIAKNYFNIGTVVGICSKNSIERNKKLGYDYLVPYDEGSIVENVKKLKQSVLENDKFDMIFDSVGNHDFFPVIDQFLKPKAKNSFYVTIAGNNKADYKNISWRDFVSLSSILKAINPFKKYNWRFGHPYPPNNFIEVGNEMIKKGTYKPPIDSVYEFDQYKEAIDRLMSNRAKGKVVVKMK.

It belongs to the YIM1 family.

It localises to the lipid droplet. Its subcellular location is the mitochondrion. The polypeptide is Protein YIM1 (YIM1) (Saccharomyces cerevisiae (strain ATCC 204508 / S288c) (Baker's yeast)).